The following is a 325-amino-acid chain: 2-oxoglutarate-dependent dioxygenase tropC (325 aa).

Residues 185 to 287 (PSIPMRLLHY…RYSVAFFLNG (103 aa)) enclose the Fe2OG dioxygenase domain. Fe cation is bound by residues H210, D212, and H269. R278 contributes to the 2-oxoglutarate binding site.

This sequence belongs to the iron/ascorbate-dependent oxidoreductase family. Fe(2+) serves as cofactor.

It functions in the pathway secondary metabolite biosynthesis. Its function is as follows. 2-oxoglutarate-dependent dioxygenase; part of the gene cluster that mediates the biosynthesis of the tropolone class of fungal maleic anhydrides. The pathway begins with the synthesis of 3-methylorcinaldehyde by the non-reducing polyketide synthase (PKS) tropA. 3-methylorcinaldehyde is the substrate for the FAD-dependent monooxygenase tropB to yield a dearomatized hydroxycyclohexadione. The 2-oxoglutarate-dependent dioxygenase tropC then performs the oxidative ring expansion to provide the first tropolone metabolite stipitaldehyde. Trop D converts stipitaldehyde into stipitacetal which is in turn converted to stipitalide by the short-chain dehydrogenase/reductase tropE. The next steps involve tropF, tropG, tropH, tropI and tropJ to form successive tropolone maleic anhydrides including stipitaldehydic, stipitatonic and stipitatic acids. The polypeptide is 2-oxoglutarate-dependent dioxygenase tropC (Talaromyces stipitatus (strain ATCC 10500 / CBS 375.48 / QM 6759 / NRRL 1006) (Penicillium stipitatum)).